Here is a 158-residue protein sequence, read N- to C-terminus: 2-C-methyl-D-erythritol 2,4-cyclodiphosphate synthase (158 aa).

A divalent metal cation-binding residues include aspartate 9 and histidine 11. 4-CDP-2-C-methyl-D-erythritol 2-phosphate-binding positions include aspartate 9–histidine 11 and histidine 35–serine 36. Histidine 43 contacts a divalent metal cation. Residues aspartate 57–glycine 59, phenylalanine 62–aspartate 66, alanine 101–alanine 107, threonine 133–glutamate 136, phenylalanine 140, and arginine 143 each bind 4-CDP-2-C-methyl-D-erythritol 2-phosphate.

The protein belongs to the IspF family. In terms of assembly, homotrimer. A divalent metal cation serves as cofactor.

The enzyme catalyses 4-CDP-2-C-methyl-D-erythritol 2-phosphate = 2-C-methyl-D-erythritol 2,4-cyclic diphosphate + CMP. It participates in isoprenoid biosynthesis; isopentenyl diphosphate biosynthesis via DXP pathway; isopentenyl diphosphate from 1-deoxy-D-xylulose 5-phosphate: step 4/6. In terms of biological role, involved in the biosynthesis of isopentenyl diphosphate (IPP) and dimethylallyl diphosphate (DMAPP), two major building blocks of isoprenoid compounds. Catalyzes the conversion of 4-diphosphocytidyl-2-C-methyl-D-erythritol 2-phosphate (CDP-ME2P) to 2-C-methyl-D-erythritol 2,4-cyclodiphosphate (ME-CPP) with a corresponding release of cytidine 5-monophosphate (CMP). This chain is 2-C-methyl-D-erythritol 2,4-cyclodiphosphate synthase, found in Vibrio vulnificus (strain YJ016).